Here is a 452-residue protein sequence, read N- to C-terminus: MFNFGEILETLKMIQEENLDIRTITLGVSLLDCVDSSIAKTCENIKQKIREKGQYLVETAKKLEIKYGIPIVNARVAVTPVSLLAGGFTETETVKIGYALEEIAQEIGVNFIGGFSALVHKGFTKGDINVLNTIPRVLAETERVCASINVATTRAGINMDGINFSARIIKETAERTRDKDGLGCAKIVVFANAPEDNPFMAGAFHGVGEADYVVNVGVSGPGVVKRVVEKIPGADLEELANEIKKTAFKITRVGELIGKEAAKMLGVKFGIVDLSLAPTPAMGDSVAEIIEAMGLEYCGAPGTTAALMMLTDAVKKGGAMASSMVGGLSGAFIPVSEDMGMVRAVEVGALNIEKLEAMTAVCSVGLDMIAIPGETPVSTIAGIIADEISIGVINGKTTAVRIIPVPGKKAGEYVEFGGLLGRTVIMDVNRFSSEKFVMRGGRIPAPIQSLRN.

It belongs to the UPF0210 family. In terms of assembly, homodimer.

This is UPF0210 protein CHY_1509 from Carboxydothermus hydrogenoformans (strain ATCC BAA-161 / DSM 6008 / Z-2901).